We begin with the raw amino-acid sequence, 686 residues long: Asparagine-rich protein (686 aa).

The N-terminal stretch at 1–18 is a signal peptide; the sequence is MKGTSALLLIGFFHATIS. Disordered stretches follow at residues 34 to 73, 125 to 148, and 201 to 236; these read KRGNLNTGGQITSNSAILGDVNAGSKLSEPPKRRNTDKTA, SLTSDTKTTTRTSQTSSTRASSSI, and ITRQKSENTQGNSIVRNGGTNSLNIPSSTRRSQPPN. Positions 37–49 are enriched in polar residues; the sequence is NLNTGGQITSNSA. The segment covering 62–73 has biased composition (basic and acidic residues); it reads EPPKRRNTDKTA.

As to expression, prismatic layer of shell (at protein level). Expressed primarily in the mantle with highest level in the mantle edge and lower level in the mantle pallium.

It localises to the secreted. This is Asparagine-rich protein from Margaritifera margaritifera (Freshwater pearl mussel).